The following is a 53-amino-acid chain: UPF0391 membrane protein BPSS2216 (53 aa).

A run of 2 helical transmembrane segments spans residues 5 to 25 (ALVF…GIAA) and 30 to 50 (IAKI…VLGV).

The protein belongs to the UPF0391 family.

The protein localises to the cell membrane. In Burkholderia pseudomallei (strain K96243), this protein is UPF0391 membrane protein BPSS2216.